The sequence spans 283 residues: 4-diphosphocytidyl-2-C-methyl-D-erythritol kinase (283 aa).

The active site involves Lys-12. ATP is bound at residue 94 to 104; the sequence is PAQAGLGGGSS. Residue Asp-136 is part of the active site.

This sequence belongs to the GHMP kinase family. IspE subfamily.

It catalyses the reaction 4-CDP-2-C-methyl-D-erythritol + ATP = 4-CDP-2-C-methyl-D-erythritol 2-phosphate + ADP + H(+). The protein operates within isoprenoid biosynthesis; isopentenyl diphosphate biosynthesis via DXP pathway; isopentenyl diphosphate from 1-deoxy-D-xylulose 5-phosphate: step 3/6. Functionally, catalyzes the phosphorylation of the position 2 hydroxy group of 4-diphosphocytidyl-2C-methyl-D-erythritol. The chain is 4-diphosphocytidyl-2-C-methyl-D-erythritol kinase from Acidovorax sp. (strain JS42).